Consider the following 46-residue polypeptide: Endochitinase 3 (46 aa).

The tract at residues 1 to 21 is disordered; it reads MTPQGNKPSSHDVITGRWTPS.

This sequence belongs to the glycosyl hydrolase 19 family. Chitinase class I subfamily.

The enzyme catalyses Random endo-hydrolysis of N-acetyl-beta-D-glucosaminide (1-&gt;4)-beta-linkages in chitin and chitodextrins.. Defense against chitin-containing fungal and bacterial pathogens. The chain is Endochitinase 3 from Arachis hypogaea (Peanut).